The sequence spans 105 residues: Hydrogen cyanide synthase subunit HcnA (105 aa).

Residues 16-97 (ADMTISLNGQ…GMQVQTLSNR (82 aa)) form the 2Fe-2S ferredoxin-type domain. [2Fe-2S] cluster is bound by residues C60, C65, C68, and C81.

In terms of assembly, heterotrimer of HcnA, HcnB and HcnC.

The protein resides in the cell membrane. The catalysed reaction is glycine + 2 A = hydrogen cyanide + 2 AH2 + CO2. Functionally, a three-component membrane-bound flavoenzyme that catalyzes the formation of hydrogen cyanide, a secondary metabolite, by transfer of electrons to a cyanide-resistant branch of the aerobic respiratory chain. Contributes to suppression of black root rot of tobacco. This Pseudomonas protegens (strain DSM 19095 / LMG 27888 / CFBP 6595 / CHA0) protein is Hydrogen cyanide synthase subunit HcnA.